Reading from the N-terminus, the 692-residue chain is ABC1 family protein C21C3.03, mitochondrial (692 aa).

The transit peptide at 1-91 directs the protein to the mitochondrion; the sequence is MISFSHWNSH…RKFTTRQKSE (91 aa). A run of 2 helical transmembrane segments spans residues 96–116 and 161–181; these read WRILRITFLVLPFTVGGLWIL and LFIIFSPIIITLPFIALISFL.

Belongs to the protein kinase superfamily. ADCK protein kinase family.

Its subcellular location is the mitochondrion membrane. In Schizosaccharomyces pombe (strain 972 / ATCC 24843) (Fission yeast), this protein is ABC1 family protein C21C3.03, mitochondrial.